Reading from the N-terminus, the 103-residue chain is UPF0473 protein LCA_0390 (103 aa).

This sequence belongs to the UPF0473 family.

The protein is UPF0473 protein LCA_0390 of Latilactobacillus sakei subsp. sakei (strain 23K) (Lactobacillus sakei subsp. sakei).